The sequence spans 769 residues: MSLRIKALDASVVNKIAAGEIIISPVNALKEMMENSIDANATMIDILVKEGGIKVLQITDNGSGINKADLPILCERFTTSKLQKFEDLSQIQTYGFRGEALASISHVARVTVTTKVKEDRCAWRVSYAEGKMLESPKPVAGKDGTTILVEDLFFNIPSRLRALRSHNDEYSKILDVVGRYAIHSKDIGFSCKKFGDSNYSLSVKPSYTVQDRIRTVFNKSVASNLITFHISKVEDLNLESVDGKVCNLNFISKKSISPIFFINNRLVTCDLLRRALNSVYSNYLPKGNRPFIYLGIVIDPAAVDVNVHPTKREVRFLSQDEIIEKIANQLHAELSAIDTSRTFKASSISTNKPESLIPFNDTIESDRNRKSLRQAQVVENSYTTANSQLRKAKRQENKLVRIDASQAKITSFLSSSQQFNFEGSSTKRQLSEPKVTNVSHSQEAEKLTLNESEQPRDANTINDNDLKDQPKKKQKLGDYKVPSIADDEKNALPISKDGYIRVPKERVNVNLTSIKKLREKVDDSIHRELTDIFANLNYVGVVDEERRLAAIQHDLKLFLIDYGSVCYELFYQIGLTDFANFGKINLQSTNVSDDIVLYNLLSEFDELNDDASKEKIISKIWDMSSMLNEYYSIELVNDGLDNDLKSVKLKSLPLLLKGYIPSLVKLPFFIYRLGKEVDWEDEQECLDGILREIALLYIPDMVPKVDTSDASLSEDEKAQFINRKEHISSLLEHVLFPCIKRRFLAPRHILKDVVEIANLPDLYKVFERC.

A DNA- and ATP-binding region spans residues Met1–Ser335. Residues Glu422–Ser441 are compositionally biased toward polar residues. The interval Glu422 to Lys480 is disordered. The residue at position 441 (Ser441) is a Phosphoserine; by ATM or ATR. 2 stretches are compositionally biased toward basic and acidic residues: residues Gln442–Arg456 and Asn464–Asp478. Residues Arg501–Ile756 form an interaction with PMS1 region.

It belongs to the DNA mismatch repair MutL/HexB family. As to quaternary structure, heterodimer of MLH1 and PMS1, called MutLalpha, which is the major MMR MutL activity correcting base-base mismatches as well as IDLs. The heterodimer binds double strand DNA independently of a mismatch with positive cooperativity and has more than one DNA binding site. Forms a ternary complex with either the MSH2-MSH6 (MutSalpha) or the MSH2-MSH3 heterodimer (MutSbeta), which recognize and bind to mismatch DNA. Ternary complex formation is promoted by ATP binding. Heterodimer of MLH1 and MLH3, called MutLbeta, which is involved in correction of a specific subset of IDLs when associated with MutSbeta. Heterodimer of MLH1 and MLH2.

The protein localises to the nucleus. Required for DNA mismatch repair (MMR), correcting base-base mismatches and insertion-deletion loops (IDLs) resulting from DNA replication, DNA damage or from recombination events between non-identical sequences during meiosis. Component of different MutL heterodimers that form a ternary complex with the MutS heterodimers, which initially recognize the DNA mismatches. This complex is thought to be responsible for directing the downstream MMR events, including strand discrimination, excision, and resynthesis. Plays a major role in maintaining the genetic stability of simple sequence repeats, the repair of heteroduplex sites present in meiotic recombination intermediates, and the promotion of meiotic crossing-over. The chain is DNA mismatch repair protein MLH1 (MLH1) from Saccharomyces cerevisiae (strain ATCC 204508 / S288c) (Baker's yeast).